Consider the following 275-residue polypeptide: NAD kinase (275 aa).

Asp68 functions as the Proton acceptor in the catalytic mechanism. NAD(+) is bound by residues 68–69 (DG), Arg73, 136–137 (NE), Lys147, Arg164, Asp166, 177–182 (TAYAMS), Ala201, and Gln236.

Belongs to the NAD kinase family. A divalent metal cation serves as cofactor.

Its subcellular location is the cytoplasm. It carries out the reaction NAD(+) + ATP = ADP + NADP(+) + H(+). Functionally, involved in the regulation of the intracellular balance of NAD and NADP, and is a key enzyme in the biosynthesis of NADP. Catalyzes specifically the phosphorylation on 2'-hydroxyl of the adenosine moiety of NAD to yield NADP. This Methanosarcina acetivorans (strain ATCC 35395 / DSM 2834 / JCM 12185 / C2A) protein is NAD kinase.